The chain runs to 198 residues: Pyridoxine/pyridoxamine 5'-phosphate oxidase 2 (198 aa).

FMN contacts are provided by residues Arg-42, 59–60 (NT), Lys-66, and 121–122 (RS).

The protein belongs to the pyridoxamine 5'-phosphate oxidase family. In terms of assembly, homodimer. It depends on FMN as a cofactor.

The enzyme catalyses pyridoxamine 5'-phosphate + O2 + H2O = pyridoxal 5'-phosphate + H2O2 + NH4(+). The catalysed reaction is pyridoxine 5'-phosphate + O2 = pyridoxal 5'-phosphate + H2O2. The protein operates within cofactor metabolism; pyridoxal 5'-phosphate salvage; pyridoxal 5'-phosphate from pyridoxamine 5'-phosphate: step 1/1. It participates in cofactor metabolism; pyridoxal 5'-phosphate salvage; pyridoxal 5'-phosphate from pyridoxine 5'-phosphate: step 1/1. Catalyzes the oxidation of either pyridoxine 5'-phosphate (PNP) or pyridoxamine 5'-phosphate (PMP) into pyridoxal 5'-phosphate (PLP). Has an in vitro catalytic efficiency for PNP approximately 300-fold lower than that of PPOX1. In Arabidopsis thaliana (Mouse-ear cress), this protein is Pyridoxine/pyridoxamine 5'-phosphate oxidase 2 (PPOX2).